A 309-amino-acid polypeptide reads, in one-letter code: Ankyrin repeat protein VACWR203 (309 aa).

ANK repeat units lie at residues 13–44 (SVFK…SLTI), 110–142 (KYGT…DINA), 160–189 (FVYH…DLTI), 197–231 (PVVY…RASH), and 269–298 (EGRT…DIVV).

It belongs to the orthopoxviruses VACWR203 protein family.

This is Ankyrin repeat protein VACWR203 from Bos taurus (Bovine).